The following is a 240-amino-acid chain: RNA-free ribonuclease P (240 aa).

It belongs to the HARP family.

It carries out the reaction Endonucleolytic cleavage of RNA, removing 5'-extranucleotides from tRNA precursor.. Functionally, RNA-free RNase P that catalyzes the removal of the 5'-leader sequence from pre-tRNA to produce the mature 5'-terminus. The polypeptide is RNA-free ribonuclease P (Methanococcus aeolicus (strain ATCC BAA-1280 / DSM 17508 / OCM 812 / Nankai-3)).